Here is an 848-residue protein sequence, read N- to C-terminus: Dolabradiene synthase KSL4, chloroplastic (848 aa).

A chloroplast-targeting transit peptide spans 1-64 (MASLSFASSH…SRMPRNVDTH (64 aa)). A disordered region spans residues 148 to 168 (QRSDGSWGPDGGSGDHPSSPL). Mg(2+)-binding residues include aspartate 597, aspartate 601, asparagine 742, serine 746, and glutamate 750. The short motif at 597 to 601 (DDLFD) is the DDXXD motif element.

Belongs to the terpene synthase family. Mg(2+) is required as a cofactor.

Its subcellular location is the plastid. It is found in the chloroplast. The catalysed reaction is ent-copalyl diphosphate = dolabradiene + diphosphate. Functionally, involved in the production of antifungal dolabralexin phytoalexins in response to biotic and abiotic stresses. In response to fungal infection and in associtation with AN2, is involved in the production dolabradiene, a type of antifungal phytoalexin. Converts ent-copalyl disphosphate (ent-CPP) to dolabradiene. The polypeptide is Dolabradiene synthase KSL4, chloroplastic (Zea mays (Maize)).